The chain runs to 500 residues: Lysine--tRNA ligase (500 aa).

Positions 410 and 417 each coordinate Mg(2+).

It belongs to the class-II aminoacyl-tRNA synthetase family. In terms of assembly, homodimer. Mg(2+) is required as a cofactor.

It localises to the cytoplasm. The enzyme catalyses tRNA(Lys) + L-lysine + ATP = L-lysyl-tRNA(Lys) + AMP + diphosphate. The sequence is that of Lysine--tRNA ligase from Pseudomonas entomophila (strain L48).